Here is a 207-residue protein sequence, read N- to C-terminus: Large ribosomal subunit protein uL4 (207 aa).

The segment at 45 to 78 (RQGTHAVKNRSAVSGGGRKPWRQKGTGRARQGSI) is disordered.

It belongs to the universal ribosomal protein uL4 family. Part of the 50S ribosomal subunit.

Its function is as follows. One of the primary rRNA binding proteins, this protein initially binds near the 5'-end of the 23S rRNA. It is important during the early stages of 50S assembly. It makes multiple contacts with different domains of the 23S rRNA in the assembled 50S subunit and ribosome. Functionally, forms part of the polypeptide exit tunnel. The protein is Large ribosomal subunit protein uL4 of Lacticaseibacillus paracasei (strain ATCC 334 / BCRC 17002 / CCUG 31169 / CIP 107868 / KCTC 3260 / NRRL B-441) (Lactobacillus paracasei).